A 79-amino-acid chain; its full sequence is Conotoxin TsMSGL-2 (79 aa).

Residues 1–24 (MSGLGIMVLTLLLLVFMATSHQDA) form the signal peptide. Residues 25–46 (GEKQATQRDAVNVRRRRSIAGR) constitute a propeptide that is removed on maturation. 3 disulfide bridges follow: Cys52/Cys64, Cys56/Cys73, and Cys63/Cys77. Leu78 bears the Leucine amide mark.

Belongs to the conotoxin O3 superfamily. In terms of tissue distribution, expressed by the venom duct.

It localises to the secreted. The protein is Conotoxin TsMSGL-2 of Conus tessulatus (Tessellate cone).